A 133-amino-acid polypeptide reads, in one-letter code: Agouti-signaling protein (133 aa).

Positions 1 to 22 (MDVIHLFLATLLVSLCFLTAYS) are cleaved as a signal peptide. Over residues 26 to 36 (PEEKPKDDRSL) the composition is skewed to basic and acidic residues. The interval 26 to 83 (PEEKPKDDRSLRNNSSMNLLDSPSVSIMALNKKSKKISRKEAEKKKRSSKKKASMTKV) is disordered. The segment covering 37 to 50 (RNNSSMNLLDSPSV) has biased composition (polar residues). Asparagine 38 and asparagine 39 each carry an N-linked (GlcNAc...) asparagine glycan. Residues 70 to 79 (KKRSSKKKAS) show a composition bias toward basic residues. 5 cysteine pairs are disulfide-bonded: cysteine 94-cysteine 109, cysteine 101-cysteine 115, cysteine 108-cysteine 126, cysteine 112-cysteine 133, and cysteine 117-cysteine 124. An Agouti domain is found at 94–133 (CVATRDSCKPPAPACCDPCASCQCRFFRSACSCRVLTRTC).

The protein resides in the secreted. Functionally, involved in the regulation of melanogenesis. The binding of ASP to MC1R precludes alpha-MSH initiated signaling and thus blocks production of cAMP, leading to a down-regulation of eumelanogenesis (brown/black pigment) and thus increasing synthesis of pheomelanin (yellow/red pigment). The chain is Agouti-signaling protein (ASIP) from Equus caballus (Horse).